A 1137-amino-acid polypeptide reads, in one-letter code: Bone sialoprotein-binding protein (1137 aa).

Residues 1-52 (MINRDNKKAITKKGMISNRLNKFSIRKYTVGTASILVGTTLIFGLGNQEAKA) form the signal peptide. The ligand binding A region stretch occupies residues 53 to 601 (AENTSTENAK…GDGTVKPEEK (549 aa)). Disordered regions lie at residues 54–249 (ENTS…TAPT) and 675–697 (LPTK…VTVK). Basic and acidic residues predominate over residues 61–75 (AKQDEASASDNKEVV). A compositionally biased stretch (polar residues) spans 77-89 (ETENNSTQKNDLT). Residues 92 to 106 (IKKETNTDSHQEAKE) are compositionally biased toward basic and acidic residues. The span at 109–126 (TTSSTQQQQNNATTSTET) shows a compositional bias: low complexity. Positions 130-145 (NIEKENVKPSTDKTAT) are enriched in basic and acidic residues. Residues 158 to 207 (PNNTNNDVTTKPSTSEIQTTPTTPQESTNIENSQPQPTPSKVDNQVTDAT) are compositionally biased toward polar residues. Over residues 216–241 (SKEELKNNPEKLKELVRNDSNTDRST) the composition is skewed to basic and acidic residues. 3 consecutive CNA-B domains span residues 602–714 (LYKI…YKEP), 715–824 (KYNL…YKTP), and 825–935 (KYSL…EEDT). The interval 896–1112 (TQTGTNTTED…TGSENNGSNN (217 aa)) is disordered. Composition is skewed to acidic residues over residues 903-913 (TEDDKDADGGE) and 930-1076 (YFEE…DSDS). Positions 1100 to 1104 (LPETG) match the LPXTG sorting signal motif. T1103 carries the pentaglycyl murein peptidoglycan amidated threonine modification. The propeptide at 1104 to 1137 (GSENNGSNNATLFGGLFAALGSLLLFGRRKKQNK) is removed by sortase.

This sequence belongs to the serine-aspartate repeat-containing protein (SDr) family.

The protein resides in the secreted. The protein localises to the cell wall. Functionally, specifically interacts with bone sialoprotein (BSP), a glycoprotein of bone and dentin extracellular matrix. Could contribute to staphylococcal osteomyelitis and arthritis. The chain is Bone sialoprotein-binding protein (bbp) from Staphylococcus aureus (strain MRSA252).